The sequence spans 362 residues: Transcription factor bHLH128 (362 aa).

The span at 1-16 shows a compositional bias: low complexity; it reads MYQSSSSTSSSSQRSS. 4 disordered regions span residues 1–23, 78–106, 120–140, and 162–184; these read MYQS…GGGL, SDST…SNKD, SQQH…YSLA, and LNQP…HSRL. Polar residues predominate over residues 78-96; sequence SDSTTCGVNNSSDGQKQLG. Residues 162–173 show a composition bias toward polar residues; the sequence is LNQPTSDYSPQG. Serine 189 carries the phosphoserine modification. The bHLH domain maps to 289 to 339; sequence CATHPRSIAERERRTRISGKLKKLQDLVPNMDKQTSYSDMLDLAVQHIKGL.

As to quaternary structure, homodimer.

The protein localises to the nucleus. The chain is Transcription factor bHLH128 (BHLH128) from Arabidopsis thaliana (Mouse-ear cress).